The sequence spans 210 residues: Isochorismatase domain-containing protein 2B (210 aa).

At Lys-178 the chain carries N6-succinyllysine.

Belongs to the isochorismatase family. In terms of assembly, interacts with CDKN2A. Ubiquitous. Expressed predominantly in uterus, stomach and urinary tract.

Its subcellular location is the cytoplasm. It localises to the nucleus. The polypeptide is Isochorismatase domain-containing protein 2B (Isoc2b) (Mus musculus (Mouse)).